We begin with the raw amino-acid sequence, 566 residues long: DNA helicase/primase (566 aa).

Residues cysteine 17, cysteine 20, cysteine 36, and cysteine 39 each coordinate Zn(2+). The C4-like; zinc ribbon fold zinc-finger motif lies at 17-39 (CDNCGSSDGNSLFSDGHTFCYVC). In terms of domain architecture, Toprim spans 151–238 (KKIVVTEGEI…RVAVLPCKDA (88 aa)). Positions 157, 207, and 237 each coordinate Mg(2+). An SF4 helicase domain is found at 281 to 548 (SEESVGLLFS…TGWLEPSSYS (268 aa)). Residue 312–319 (SGSGMGKS) participates in ATP binding. The tract at residues 543–566 (EPSSYSGEEESHSESTDWSNDTDF) is disordered. The binding to viral DNA polymerase stretch occupies residues 550-566 (EEESHSESTDWSNDTDF).

The protein belongs to the Teseptimavirus DNA helicase/primase family. In terms of assembly, homohexamer. Assembles as a hexamer onto linear or circular ssDNA in the presence of ATP or dTTP. Present in a mixture of heptamers and hexamers in the absence of DNA. Interacts (via C-terminus) with the viral DNA polymerase that is bound to DNA; this interaction is essential to initiate leading-strand DNA synthesis. The priming complex consists of 2 DNA polymerases and 1 helicase-primase hexamer that assemble on the DNA template. Interacts with the single-stranded DNA-binding protein. Part of the replicase complex that includes the DNA polymerase, thioredoxin, the primase/helicase and the single-stranded DNA binding protein. It depends on Mg(2+) as a cofactor.

It catalyses the reaction ATP + H2O = ADP + phosphate + H(+). Functionally, ATP-dependent DNA helicase and primase essential for viral DNA replication and recombination. The helicase moves 5' -&gt; 3' on the lagging strand template, unwinding the DNA duplex ahead of the leading strand polymerase at the replication fork and generating ssDNA for both leading and lagging strand synthesis. ATP or dTTP hydrolysis propels each helicase domain to translocate 2 nt per step sequentially along DNA. Mediates strand transfer when a joint molecule is available and participates in recombinational DNA repair through its role in strand exchange. Primase activity synthesizes short RNA primers at the sequence 5'-GTC-3' on the lagging strand that the polymerase elongates using dNTPs and providing the primase is still present. The protein is DNA helicase/primase of Escherichia phage T7 (Bacteriophage T7).